Here is a 426-residue protein sequence, read N- to C-terminus: Tyrosine--tRNA ligase (426 aa).

Residue Y38 coordinates L-tyrosine. The 'HIGH' region signature appears at 43-52 (PTADSLHIGS). Positions 176 and 180 each coordinate L-tyrosine. The 'KMSKS' region signature appears at 236 to 240 (KFGKT). K239 serves as a coordination point for ATP. An S4 RNA-binding domain is found at 359-426 (QTIVEVLTQS…KKLFNLYIWK (68 aa)).

Belongs to the class-I aminoacyl-tRNA synthetase family. TyrS type 1 subfamily. In terms of assembly, homodimer.

The protein resides in the cytoplasm. It carries out the reaction tRNA(Tyr) + L-tyrosine + ATP = L-tyrosyl-tRNA(Tyr) + AMP + diphosphate + H(+). Functionally, catalyzes the attachment of tyrosine to tRNA(Tyr) in a two-step reaction: tyrosine is first activated by ATP to form Tyr-AMP and then transferred to the acceptor end of tRNA(Tyr). This is Tyrosine--tRNA ligase from Aliivibrio salmonicida (strain LFI1238) (Vibrio salmonicida (strain LFI1238)).